Reading from the N-terminus, the 563-residue chain is Probable Xaa-Pro aminopeptidase PEPP (563 aa).

Mn(2+) contacts are provided by Asp-331, Asp-342, Glu-491, and Glu-532.

This sequence belongs to the peptidase M24B family. Mn(2+) serves as cofactor.

It catalyses the reaction Release of any N-terminal amino acid, including proline, that is linked to proline, even from a dipeptide or tripeptide.. Functionally, catalyzes the removal of a penultimate prolyl residue from the N-termini of peptides. The sequence is that of Probable Xaa-Pro aminopeptidase PEPP (PEPP) from Verticillium alfalfae (strain VaMs.102 / ATCC MYA-4576 / FGSC 10136) (Verticillium wilt of alfalfa).